The chain runs to 213 residues: Holliday junction branch migration complex subunit RuvA (213 aa).

Residues 1–64 (MIASVTGEVA…DEAPLLFGFA (64 aa)) are domain I. The interval 65 to 143 (QGDEKEIFTV…LPEPPVQQAN (79 aa)) is domain II. The interval 144–152 (QPQVPVWRD) is flexible linker. Positions 152–213 (DQVVDALTGL…GTTHAPTGRR (62 aa)) are domain III.

This sequence belongs to the RuvA family. Homotetramer. Forms an RuvA(8)-RuvB(12)-Holliday junction (HJ) complex. HJ DNA is sandwiched between 2 RuvA tetramers; dsDNA enters through RuvA and exits via RuvB. An RuvB hexamer assembles on each DNA strand where it exits the tetramer. Each RuvB hexamer is contacted by two RuvA subunits (via domain III) on 2 adjacent RuvB subunits; this complex drives branch migration. In the full resolvosome a probable DNA-RuvA(4)-RuvB(12)-RuvC(2) complex forms which resolves the HJ.

It localises to the cytoplasm. Its function is as follows. The RuvA-RuvB-RuvC complex processes Holliday junction (HJ) DNA during genetic recombination and DNA repair, while the RuvA-RuvB complex plays an important role in the rescue of blocked DNA replication forks via replication fork reversal (RFR). RuvA specifically binds to HJ cruciform DNA, conferring on it an open structure. The RuvB hexamer acts as an ATP-dependent pump, pulling dsDNA into and through the RuvAB complex. HJ branch migration allows RuvC to scan DNA until it finds its consensus sequence, where it cleaves and resolves the cruciform DNA. This chain is Holliday junction branch migration complex subunit RuvA, found in Kocuria rhizophila (strain ATCC 9341 / DSM 348 / NBRC 103217 / DC2201).